The primary structure comprises 973 residues: Translation initiation factor IF-2 (973 aa).

Basic and acidic residues predominate over residues G97–E135. Disordered regions lie at residues G97 to Q343 and L353 to D372. The segment covering A136–P155 has biased composition (low complexity). 4 stretches are compositionally biased toward basic and acidic residues: residues T156–E175, P183–L204, L212–L224, and T237–K250. Low complexity predominate over residues N252–P266. 2 stretches are compositionally biased toward basic and acidic residues: residues P315–K326 and V333–Q343. The region spanning A472–K642 is the tr-type G domain. The segment at G481 to T488 is G1. G481–T488 contacts GTP. The G2 stretch occupies residues G506–H510. Residues D528 to G531 form a G3 region. GTP contacts are provided by residues D528–H532 and N582–D585. Residues N582–D585 form a G4 region. The segment at S618–K620 is G5.

The protein belongs to the TRAFAC class translation factor GTPase superfamily. Classic translation factor GTPase family. IF-2 subfamily.

It is found in the cytoplasm. One of the essential components for the initiation of protein synthesis. Protects formylmethionyl-tRNA from spontaneous hydrolysis and promotes its binding to the 30S ribosomal subunits. Also involved in the hydrolysis of GTP during the formation of the 70S ribosomal complex. The polypeptide is Translation initiation factor IF-2 (Parabacteroides distasonis (strain ATCC 8503 / DSM 20701 / CIP 104284 / JCM 5825 / NCTC 11152)).